Here is a 131-residue protein sequence, read N- to C-terminus: Lysosomal enzyme trafficking factor (131 aa).

2 consecutive transmembrane segments (helical) span residues 8 to 28 (MGWI…YYVF) and 66 to 86 (LPFW…FLFL).

This sequence belongs to the LYSET family.

It is found in the golgi apparatus membrane. Functionally, required for mannose-6-phosphate-dependent trafficking of lysosomal enzymes. LYSET bridges GlcNAc-1-phosphate transferase (GNPTAB), to the membrane-bound transcription factor site-1 protease (MBTPS1), thus allowing proteolytic activation of the GNPTAB. GNPTAB is involved in the regulation of M6P-dependent Golgi-to-lysosome trafficking of lysosomal enzymes. LYSET is thus an essential factor for maturation and delivery of lysosomal hydrolases. This is Lysosomal enzyme trafficking factor (lyset-b) from Xenopus laevis (African clawed frog).